We begin with the raw amino-acid sequence, 262 residues long: MRRYSPPYYSPPRRGYGGRGRSPPPPPPRRGYGGGGGGGGRRGSSHGSLLVRNIPLDCRPEELREPFERFGPVRDVYIPRDYYSGQPRGFAFVEFVDAYDAGEAQRSMNRRSFAGREITVVVASESRKRPEEMRVKTRTRSREPSGSRDRSHGRSRSRSISRSRSPRRPSDSRSRYRSRSYSPAPRRRGGPPRGEEDENYSRRSYSPGYEGAAAAAPDRDRNGDNEIREKPGYEAEDRRRGGRAVSRSPSGSRSRSVEVSPR.

Low complexity predominate over residues 1 to 14 (MRRYSPPYYSPPRR). Disordered stretches follow at residues 1 to 48 (MRRY…SHGS) and 123 to 262 (ASES…VSPR). S5, S10, and S22 each carry phosphoserine. Gly residues predominate over residues 31-42 (GYGGGGGGGGRR). The RRM domain maps to 47 to 125 (GSLLVRNIPL…REITVVVASE (79 aa)). Over residues 125 to 152 (ESRKRPEEMRVKTRTRSREPSGSRDRSH) the composition is skewed to basic and acidic residues. The segment covering 153-167 (GRSRSRSISRSRSPR) has biased composition (basic residues). S182, S204, and S206 each carry phosphoserine. The residue at position 209 (Y209) is a Phosphotyrosine. Residues 217–239 (PDRDRNGDNEIREKPGYEAEDRR) are compositionally biased toward basic and acidic residues. Residues 243–262 (RAVSRSPSGSRSRSVEVSPR) are compositionally biased toward low complexity. Phosphoserine occurs at positions 254, 256, and 260.

It belongs to the splicing factor SR family. SCL subfamily. As to quaternary structure, component of the spliceosome. Interacts with RS2Z33, CYP59, CYP63 and CYP95. Phosphorylated.

It localises to the nucleus speckle. In terms of biological role, involved in intron recognition and spliceosome assembly. Probably active at the 5' splice sites. In Arabidopsis thaliana (Mouse-ear cress), this protein is Serine/arginine-rich SC35-like splicing factor SCL30 (SCL30).